The sequence spans 240 residues: Putative cytochrome c-type biogenesis protein DbsD-like (240 aa).

Helical transmembrane passes span 32 to 52 (FVFF…ILPI), 74 to 94 (FFFC…ATLL), 104 to 124 (GIPV…LNIV), 149 to 169 (VGIG…LLIW), 176 to 196 (LFIG…PIII), and 218 to 238 (APFS…SSIL).

This sequence belongs to the DsbD family.

The protein resides in the plastid. The protein localises to the chloroplast membrane. Could be involved in cytochrome c synthesis. This chain is Putative cytochrome c-type biogenesis protein DbsD-like, found in Porphyra purpurea (Red seaweed).